Consider the following 359-residue polypeptide: MQTEHWGSLPAEDDGGQLTPDKYVPTAAKKLKLDEIRQRGDPQPQEKHHKLELRSALVTQTIEVMKQTEVLQSLIETYSNKNGSSNYLLNPCLMIPEVDFPPENAAELVGSQKFQKPIWFTPTVDTAYSRGDPEAYPEIPSSACRQAMRKVMCGMLRLAGFTDCSESAVQLLTDATEEFLRSFIGEYRGYYDSQPRLQNSTVLQLVPLERAHFAQTGTSLTQVHNYYKHKVLARNRAEIAEFNSVLQEYDKLMKESQSSMQKQHNEFNGHDFLNILDNSATGSSQSIGGMAMGDMLQDLGGSTGSSGTVSSQQMLYGLLDGQISSNTSNMTGTSGNGSTGGNGNGNGATISNFHATFET.

As to quaternary structure, component of the Spt-Ada-Gcn5 acetyltransferase (SAGA) complex consisting of wda/Taf5L, Saf6, Taf9, Taf10b, Taf12, Ada1, Spt3, Spt7, Spt20, Sf3b3, Sf3b5, Nipped-A/Tra1, a histone acetyltransferase (HAT) module made up of Gcn5, Ada2b (Isoform B), Ada3 and Sgf29, and a deubiquitinase (DUB) module made up of not/nonstop, Sgf11 and e(y)2 tethered to SAGA by Atxn7. Interacts with Ada2b; the interaction is direct.

It is found in the nucleus. In terms of biological role, component of the transcription regulatory complex SAGA, a multiprotein complex that activates transcription by remodeling chromatin and mediating histone acetylation and deubiquitination. The SAGA complex predominantly acetylates histone H3. The chain is SAGA complex subunit Spt7 from Drosophila melanogaster (Fruit fly).